Consider the following 434-residue polypeptide: Enolase (434 aa).

Residues His-158 and Glu-167 each coordinate substrate. Glu-210 acts as the Proton donor in catalysis. Residues Asp-245, Glu-294, and Asp-319 each contribute to the Mg(2+) site. Substrate is bound by residues Glu-294 and Asp-319. Residue Lys-344 is the Proton acceptor of the active site. Residues 371 to 374 and Lys-395 each bind substrate; that span reads SHRS.

The protein belongs to the enolase family. Homodimer. Mg(2+) is required as a cofactor.

Its subcellular location is the cytoplasm. The catalysed reaction is (2R)-2-phosphoglycerate = phosphoenolpyruvate + H2O. The protein operates within carbohydrate degradation; glycolysis; pyruvate from D-glyceraldehyde 3-phosphate: step 4/5. In Schistosoma japonicum (Blood fluke), this protein is Enolase (ENO).